Here is a 284-residue protein sequence, read N- to C-terminus: Steroidogenic acute regulatory protein, mitochondrial (284 aa).

Residues Met-1–Leu-62 constitute a mitochondrion transit peptide. Residues Ser-56 and Ser-194 each carry the phosphoserine; by PKA modification. The START domain occupies Leu-66–Ala-279.

May interact with TSPO.

It localises to the mitochondrion. It functions in the pathway steroid metabolism; cholesterol metabolism. Plays a key role in steroid hormone synthesis by enhancing the metabolism of cholesterol into pregnenolone. Mediates the transfer of cholesterol from the outer mitochondrial membrane to the inner mitochondrial membrane where it is cleaved to pregnenolone. The chain is Steroidogenic acute regulatory protein, mitochondrial (STAR) from Mesocricetus auratus (Golden hamster).